The primary structure comprises 142 residues: Putative pre-16S rRNA nuclease (142 aa).

It belongs to the YqgF nuclease family.

The protein localises to the cytoplasm. Its function is as follows. Could be a nuclease involved in processing of the 5'-end of pre-16S rRNA. This chain is Putative pre-16S rRNA nuclease, found in Staphylococcus haemolyticus (strain JCSC1435).